The sequence spans 601 residues: Glutamine--fructose-6-phosphate aminotransferase [isomerizing] (601 aa).

Cys-2 acts as the Nucleophile; for GATase activity in catalysis. In terms of domain architecture, Glutamine amidotransferase type-2 spans 2–218 (CGIVGYIGYD…DHEIVIVKRD (217 aa)). SIS domains lie at 284-423 (IIND…NHGR) and 453-591 (IATD…VDKP). Residue Lys-596 is the For Fru-6P isomerization activity of the active site.

Homodimer.

It is found in the cytoplasm. The enzyme catalyses D-fructose 6-phosphate + L-glutamine = D-glucosamine 6-phosphate + L-glutamate. Its function is as follows. Catalyzes the first step in hexosamine metabolism, converting fructose-6P into glucosamine-6P using glutamine as a nitrogen source. The sequence is that of Glutamine--fructose-6-phosphate aminotransferase [isomerizing] from Staphylococcus epidermidis (strain ATCC 35984 / DSM 28319 / BCRC 17069 / CCUG 31568 / BM 3577 / RP62A).